The chain runs to 541 residues: Chaperonin GroEL (541 aa).

Residues 29 to 32 (TLGP), 86 to 90 (DGTTT), glycine 413, 476 to 478 (NAA), and aspartate 492 contribute to the ATP site.

The protein belongs to the chaperonin (HSP60) family. Forms a cylinder of 14 subunits composed of two heptameric rings stacked back-to-back. Interacts with the co-chaperonin GroES.

The protein localises to the cytoplasm. It carries out the reaction ATP + H2O + a folded polypeptide = ADP + phosphate + an unfolded polypeptide.. In terms of biological role, together with its co-chaperonin GroES, plays an essential role in assisting protein folding. The GroEL-GroES system forms a nano-cage that allows encapsulation of the non-native substrate proteins and provides a physical environment optimized to promote and accelerate protein folding. The polypeptide is Chaperonin GroEL (Enterococcus faecalis (strain ATCC 700802 / V583)).